A 36-amino-acid polypeptide reads, in one-letter code: Dolichyl-diphosphooligosaccharide--protein glycosyltransferase subunit 2 (36 aa).

Belongs to the SWP1 family. In terms of assembly, component of the oligosaccharyltransferase (OST) complex.

The protein resides in the endoplasmic reticulum. It is found in the endoplasmic reticulum membrane. The protein operates within protein modification; protein glycosylation. Its function is as follows. Subunit of the oligosaccharyl transferase (OST) complex that catalyzes the initial transfer of a defined glycan (Glc(3)Man(9)GlcNAc(2) in eukaryotes) from the lipid carrier dolichol-pyrophosphate to an asparagine residue within an Asn-X-Ser/Thr consensus motif in nascent polypeptide chains, the first step in protein N-glycosylation. N-glycosylation occurs cotranslationally and the complex associates with the Sec61 complex at the channel-forming translocon complex that mediates protein translocation across the endoplasmic reticulum (ER). All subunits are required for a maximal enzyme activity. This is Dolichyl-diphosphooligosaccharide--protein glycosyltransferase subunit 2 from Gallus gallus (Chicken).